Reading from the N-terminus, the 60-residue chain is Toxin TdNa2 (60 aa).

One can recognise an LCN-type CS-alpha/beta domain in the interval 1–59 (RDAYPADWRGCKPSCPWGSSSWCNEECTSLGGSSGYCAWPACWCYGLPDSVRYYNNKCH). Cystine bridges form between C11-C58, C15-C37, C23-C42, and C27-C44.

The protein belongs to the long (4 C-C) scorpion toxin superfamily. Sodium channel inhibitor family. Beta subfamily. As to expression, expressed by the venom gland.

The protein localises to the secreted. Functionally, inhibits the sodium currents (Nav) in an apparent irreversible manner. Produces small depolarization and induces repetitive firing in squid axons. Is specific for arthropods (crickets, triatomides, crabs and squids), but is non-toxic to mice. This Tityus discrepans (Venezuelan scorpion) protein is Toxin TdNa2.